The primary structure comprises 25 residues: Cytochrome c oxidase polypeptide VIIc (25 aa).

Positions 1–25 (SHYSEGPGQNLPFSVQNKXRLLGMM) are disordered.

It belongs to the cytochrome c oxidase VIIc family. As to quaternary structure, component of the cytochrome c oxidase (complex IV, CIV), a multisubunit enzyme composed of 14 subunits. The complex is composed of a catalytic core of 3 subunits MT-CO1, MT-CO2 and MT-CO3, encoded in the mitochondrial DNA, and 11 supernumerary subunits COX4I, COX5A, COX5B, COX6A, COX6B, COX6C, COX7A, COX7B, COX7C, COX8 and NDUFA4, which are encoded in the nuclear genome. The complex exists as a monomer or a dimer and forms supercomplexes (SCs) in the inner mitochondrial membrane with NADH-ubiquinone oxidoreductase (complex I, CI) and ubiquinol-cytochrome c oxidoreductase (cytochrome b-c1 complex, complex III, CIII), resulting in different assemblies (supercomplex SCI(1)III(2)IV(1) and megacomplex MCI(2)III(2)IV(2)). Interacts with RAB5IF.

The protein resides in the mitochondrion inner membrane. The protein operates within energy metabolism; oxidative phosphorylation. Its function is as follows. Component of the cytochrome c oxidase, the last enzyme in the mitochondrial electron transport chain which drives oxidative phosphorylation. The respiratory chain contains 3 multisubunit complexes succinate dehydrogenase (complex II, CII), ubiquinol-cytochrome c oxidoreductase (cytochrome b-c1 complex, complex III, CIII) and cytochrome c oxidase (complex IV, CIV), that cooperate to transfer electrons derived from NADH and succinate to molecular oxygen, creating an electrochemical gradient over the inner membrane that drives transmembrane transport and the ATP synthase. Cytochrome c oxidase is the component of the respiratory chain that catalyzes the reduction of oxygen to water. Electrons originating from reduced cytochrome c in the intermembrane space (IMS) are transferred via the dinuclear copper A center (CU(A)) of subunit 2 and heme A of subunit 1 to the active site in subunit 1, a binuclear center (BNC) formed by heme A3 and copper B (CU(B)). The BNC reduces molecular oxygen to 2 water molecules using 4 electrons from cytochrome c in the IMS and 4 protons from the mitochondrial matrix. In Oncorhynchus mykiss (Rainbow trout), this protein is Cytochrome c oxidase polypeptide VIIc.